Here is a 620-residue protein sequence, read N- to C-terminus: E3 ubiquitin-protein ligase DTX1 (620 aa).

WWE domains follow at residues 14-94 (GLGF…PVRR) and 95-171 (NFYD…RLRR). 3 disordered regions span residues 221 to 248 (SQRR…LAVR), 262 to 313 (PAAG…SIPP), and 361 to 391 (PPVS…KSKN). Pro residues-rich tracts occupy residues 227-241 (PPAP…PGGP) and 268-280 (EPAP…PRSP). The short motif at 230-233 (PPLP) is the SH3-binding element. A compositionally biased stretch (polar residues) spans 291 to 307 (QNNLNRPGPQRTTSVSA). The span at 379-389 (RKTKKKHLKKS) shows a compositional bias: basic residues. The RING-type zinc finger occupies 411 to 472 (CTICMERLVT…DGSLQCPTCK (62 aa)).

It belongs to the Deltex family. As to quaternary structure, homodimer. May form a heterodimer with other members of the Deltex family. Interacts with NOTCH1 via its N-terminal region and EIF3F, the interaction is required for NOTCH1 deubiquitination. Interacts with EP300. Forms a heterodimer with BBAP; the heterodimerization leading to an increase of in vitro ubiquitin ligase activity. Interacts with ITCH. In terms of processing, ubiquitinated; undergoes 'Lys-29'-linked polyubiquitination catalyzed by ITCH. In terms of tissue distribution, widely expressed. Strongly expressed in blood vessel. Also expressed in embryonic nervous system, pancreas, lung, adrenal gland, digestive tube and muscles. Expressed in MZB cells and developing B- and T-cells.

It is found in the cytoplasm. The protein localises to the nucleus. It catalyses the reaction S-ubiquitinyl-[E2 ubiquitin-conjugating enzyme]-L-cysteine + [acceptor protein]-L-lysine = [E2 ubiquitin-conjugating enzyme]-L-cysteine + N(6)-ubiquitinyl-[acceptor protein]-L-lysine.. The protein operates within protein modification; protein ubiquitination. Functions as a ubiquitin ligase protein in vivo, mediating ubiquitination and promoting degradation of MEKK1, suggesting that it may regulate the Notch pathway via some ubiquitin ligase activity. Regulator of Notch signaling, a signaling pathway involved in cell-cell communications that regulates a broad spectrum of cell-fate determinations. Mainly acts as a positive regulator of Notch, but it also acts as a negative regulator, depending on the developmental and cell context. Mediates the antineural activity of Notch, possibly by inhibiting the transcriptional activation mediated by MATCH1. Involved in neurogenesis, lymphogenesis and myogenesis, and may also be involved in MZB (Marginal zone B) cell differentiation. Promotes B-cell development at the expense of T-cell development, suggesting that it can antagonize NOTCH1. This Homo sapiens (Human) protein is E3 ubiquitin-protein ligase DTX1 (DTX1).